The following is a 596-amino-acid chain: Beta-fructofuranosidase, insoluble isoenzyme 7 (596 aa).

The first 24 residues, 1-24 (MARLGLAVCAASFHLFLLLASTSS), serve as a signal peptide directing secretion. Residues 51–54 (WQND), Gln70, and Trp78 contribute to the substrate site. Residue Asp54 is part of the active site. Residue Asn82 is glycosylated (N-linked (GlcNAc...) asparagine). Residues 115-116 (WS), 179-180 (RD), and Glu234 contribute to the substrate site. Asn330 carries N-linked (GlcNAc...) asparagine glycosylation. A disulfide bond links Cys432 and Cys478. N-linked (GlcNAc...) asparagine glycosylation is present at Asn552.

It belongs to the glycosyl hydrolase 32 family. As to expression, expressed in roots, leaves and flowers. Weakly expressed in seeds.

Its subcellular location is the secreted. The protein localises to the extracellular space. It is found in the apoplast. The protein resides in the cell wall. The enzyme catalyses Hydrolysis of terminal non-reducing beta-D-fructofuranoside residues in beta-D-fructofuranosides.. In terms of biological role, may play a role in sucrose partitioning during seed development. This is Beta-fructofuranosidase, insoluble isoenzyme 7 (CIN7) from Oryza sativa subsp. japonica (Rice).